Reading from the N-terminus, the 407-residue chain is MVRKCLLAVLMLLSVIVLPGCWDKRELTDLAIISAIGIDRTNDSNYVLHLQIINPGNVAGGLQGGGAGDRPPVSVYSIEGNNITEALRKASMKVSRRLYFAHTNLVVINEKLAKEEGLDFVLDNLDRDTEFRTTATFVVAHKTKAENIVKILTPIDKIPSNKVNKTLDFTEAQYGRVVKINIQDVLKTLAANTMAPVIPGYMMIGDDKKGVSMENTQATDPKAILQADGLAVFDKAGYLKYWLEDDESVGAVWLMNKIQHTFINADWGKTKDAVSLQVTHQDTKLVPKMRNGRPYIHVKVSVEGIIDAVKYPFQLSDPKVLAAIEKALNKELEKEISHTVKKIKKNKIDFIGFGDTIYRKYPEQWEKMKDTWDKEYLPELPIDVKAETYIRRTGLRNNPIKHQFKDD.

The signal sequence occupies residues 1–20 (MVRKCLLAVLMLLSVIVLPG). C21 carries N-palmitoyl cysteine lipidation. C21 carries S-diacylglycerol cysteine lipidation.

This sequence belongs to the GerABKC lipoprotein family.

It localises to the cell membrane. Involved in the germination response to the combination of glucose, fructose, L-asparagine, and KCl. The polypeptide is Spore germination protein KC (gerKC) (Bacillus subtilis (strain 168)).